A 299-amino-acid chain; its full sequence is 4-hydroxybenzoate octaprenyltransferase (299 aa).

7 helical membrane passes run 31 to 51 (IGIY…ADGL), 54 to 74 (WDVL…GCVI), 105 to 125 (VLFF…TNPL), 148 to 168 (QLPQ…AFAA), 177 to 197 (IWVL…FYAM), 241 to 261 (FGLG…FAYQ), and 277 to 297 (FLHN…DKLI).

This sequence belongs to the UbiA prenyltransferase family. It depends on Mg(2+) as a cofactor.

It localises to the cell inner membrane. The enzyme catalyses all-trans-octaprenyl diphosphate + 4-hydroxybenzoate = 4-hydroxy-3-(all-trans-octaprenyl)benzoate + diphosphate. It functions in the pathway cofactor biosynthesis; ubiquinone biosynthesis. Catalyzes the prenylation of para-hydroxybenzoate (PHB) with an all-trans polyprenyl group. Mediates the second step in the final reaction sequence of ubiquinone-8 (UQ-8) biosynthesis, which is the condensation of the polyisoprenoid side chain with PHB, generating the first membrane-bound Q intermediate 3-octaprenyl-4-hydroxybenzoate. In Saccharophagus degradans (strain 2-40 / ATCC 43961 / DSM 17024), this protein is 4-hydroxybenzoate octaprenyltransferase.